The following is a 484-amino-acid chain: Myosin-binding protein H (484 aa).

The interval 1–78 (MTGKATPEAS…KPEAPSEDVP (78 aa)) is disordered. Phosphothreonine is present on residues Thr-2, Thr-6, and Thr-26. The span at 41–71 (QEQAPEPQKQPQAQDPAAHEAPATPATTKPE) shows a compositional bias: low complexity. The 96-residue stretch at 80 to 175 (APLQLTLEDV…LDQPVHIQEI (96 aa)) folds into the Fibronectin type-III 1 domain. Residues 179 to 267 (PKIRVPRHLR…EGLEAKAAID (89 aa)) enclose the Ig-like C2-type 1 domain. The 96-residue stretch at 276 to 371 (PPSSIKLLDV…TKELAHIHKA (96 aa)) folds into the Fibronectin type-III 2 domain. Residues 389–479 (PSFTQPVADR…PAVDCRLEVK (91 aa)) form the Ig-like C2-type 2 domain.

Belongs to the immunoglobulin superfamily. MyBP family. In terms of tissue distribution, skeletal muscle.

Its function is as follows. Binds to myosin; probably involved in interaction with thick myofilaments in the A-band. This chain is Myosin-binding protein H (Mybph), found in Rattus norvegicus (Rat).